A 126-amino-acid polypeptide reads, in one-letter code: Histone H2B 8 (126 aa).

Residues 1–12 (MPEPAKSAPAPK) are compositionally biased toward low complexity. The interval 1-35 (MPEPAKSAPAPKKGSKKAVTKTQKKGDKKRRKTRK) is disordered. N6-acetyllysine is present on residues K6 and K13. Over residues 13–34 (KGSKKAVTKTQKKGDKKRRKTR) the composition is skewed to basic residues. At S15 the chain carries Phosphoserine. 2 positions are modified to N6-acetyllysine: K16 and K21. S113 carries an O-linked (GlcNAc) serine glycan. K121 is covalently cross-linked (Glycyl lysine isopeptide (Lys-Gly) (interchain with G-Cter in ubiquitin)).

It belongs to the histone H2B family. In terms of assembly, the nucleosome is a histone octamer containing two molecules each of H2A, H2B, H3 and H4 assembled in one H3-H4 heterotetramer and two H2A-H2B heterodimers. The octamer wraps approximately 147 bp of DNA. Monoubiquitination of Lys-121 by the BRE1 gives a specific tag for epigenetic transcriptional activation and is also prerequisite for histone H3 'Lys-4' and 'Lys-79' methylation. Post-translationally, phosphorylated on Ser-15 during apoptosis; which facilitates apoptotic chromatin condensation. In terms of processing, glcNAcylation at Ser-113 promotes monoubiquitination of Lys-121. It fluctuates in response to extracellular glucose, and associates with transcribed genes.

The protein resides in the nucleus. It localises to the chromosome. Functionally, core component of nucleosome. Nucleosomes wrap and compact DNA into chromatin, limiting DNA accessibility to the cellular machineries which require DNA as a template. Histones thereby play a central role in transcription regulation, DNA repair, DNA replication and chromosomal stability. DNA accessibility is regulated via a complex set of post-translational modifications of histones, also called histone code, and nucleosome remodeling. This chain is Histone H2B 8 (H2B-VIII), found in Gallus gallus (Chicken).